Here is a 543-residue protein sequence, read N- to C-terminus: CTP synthase (543 aa).

Residues 1-265 (MTKFIFVTGG…DRLVTDRFRI (265 aa)) are amidoligase domain. A CTP-binding site is contributed by serine 13. Residue serine 13 coordinates UTP. Residues 14 to 19 (SLGKGI) and aspartate 71 contribute to the ATP site. Mg(2+) contacts are provided by aspartate 71 and glutamate 139. Residues 146–148 (DIE), 186–191 (KTKPTQ), and lysine 222 contribute to the CTP site. UTP contacts are provided by residues 186-191 (KTKPTQ) and lysine 222. Residues 290–541 (EIAMVGKYVD…VEAASQHKQT (252 aa)) enclose the Glutamine amidotransferase type-1 domain. An L-glutamine-binding site is contributed by glycine 351. The active-site Nucleophile; for glutamine hydrolysis is cysteine 378. L-glutamine contacts are provided by residues 379–382 (LGMQ), glutamate 402, and arginine 469. Active-site residues include histidine 514 and glutamate 516.

This sequence belongs to the CTP synthase family. In terms of assembly, homotetramer.

The catalysed reaction is UTP + L-glutamine + ATP + H2O = CTP + L-glutamate + ADP + phosphate + 2 H(+). It carries out the reaction L-glutamine + H2O = L-glutamate + NH4(+). The enzyme catalyses UTP + NH4(+) + ATP = CTP + ADP + phosphate + 2 H(+). It functions in the pathway pyrimidine metabolism; CTP biosynthesis via de novo pathway; CTP from UDP: step 2/2. Allosterically activated by GTP, when glutamine is the substrate; GTP has no effect on the reaction when ammonia is the substrate. The allosteric effector GTP functions by stabilizing the protein conformation that binds the tetrahedral intermediate(s) formed during glutamine hydrolysis. Inhibited by the product CTP, via allosteric rather than competitive inhibition. Functionally, catalyzes the ATP-dependent amination of UTP to CTP with either L-glutamine or ammonia as the source of nitrogen. Regulates intracellular CTP levels through interactions with the four ribonucleotide triphosphates. This is CTP synthase from Hydrogenovibrio crunogenus (strain DSM 25203 / XCL-2) (Thiomicrospira crunogena).